A 277-amino-acid chain; its full sequence is Anamorsin homolog (277 aa).

The interval Met-1–Val-134 is N-terminal SAM-like domain. A linker region spans residues Ser-135–Val-191. [2Fe-2S] cluster is bound by residues Cys-199, Cys-210, Cys-213, and Cys-215. Residues Cys-199–Cys-215 are fe-S binding site A. [4Fe-4S] cluster-binding residues include Cys-238, Cys-241, Cys-249, and Cys-252. Short sequence motifs (cx2C motif) lie at residues Cys-238 to Cys-241 and Cys-249 to Cys-252. The interval Cys-238 to Cys-252 is fe-S binding site B.

This sequence belongs to the anamorsin family. In terms of assembly, monomer. It depends on [2Fe-2S] cluster as a cofactor. Requires [4Fe-4S] cluster as cofactor.

Its subcellular location is the cytoplasm. The protein resides in the mitochondrion intermembrane space. In terms of biological role, component of the cytosolic iron-sulfur (Fe-S) protein assembly (CIA) machinery. Required for the maturation of extramitochondrial Fe-S proteins. Part of an electron transfer chain functioning in an early step of cytosolic Fe-S biogenesis, facilitating the de novo assembly of a [4Fe-4S] cluster on the cytosolic Fe-S scaffold complex. Electrons are transferred from NADPH via a FAD- and FMN-containing diflavin oxidoreductase. Together with the diflavin oxidoreductase, also required for the assembly of the diferric tyrosyl radical cofactor of ribonucleotide reductase (RNR), probably by providing electrons for reduction during radical cofactor maturation in the catalytic small subunit. This is Anamorsin homolog from Phytophthora infestans (strain T30-4) (Potato late blight agent).